A 490-amino-acid polypeptide reads, in one-letter code: Glutamate--tRNA ligase 1 (490 aa).

The 'HIGH' region motif lies at 27 to 37 (PSPTGYLHIGG). The 'KMSKS' region motif lies at 254-258 (KLSKR). Residue lysine 257 participates in ATP binding.

This sequence belongs to the class-I aminoacyl-tRNA synthetase family. Glutamate--tRNA ligase type 1 subfamily. Monomer.

The protein resides in the cytoplasm. It catalyses the reaction tRNA(Glu) + L-glutamate + ATP = L-glutamyl-tRNA(Glu) + AMP + diphosphate. Functionally, catalyzes the attachment of glutamate to tRNA(Glu) in a two-step reaction: glutamate is first activated by ATP to form Glu-AMP and then transferred to the acceptor end of tRNA(Glu). The chain is Glutamate--tRNA ligase 1 from Sphingopyxis alaskensis (strain DSM 13593 / LMG 18877 / RB2256) (Sphingomonas alaskensis).